The primary structure comprises 259 residues: 5'-nucleotidase SurE (259 aa).

4 residues coordinate a divalent metal cation: D8, D9, S41, and N100.

The protein belongs to the SurE nucleotidase family. Requires a divalent metal cation as cofactor.

The protein resides in the cytoplasm. It carries out the reaction a ribonucleoside 5'-phosphate + H2O = a ribonucleoside + phosphate. Nucleotidase that shows phosphatase activity on nucleoside 5'-monophosphates. This chain is 5'-nucleotidase SurE, found in Natranaerobius thermophilus (strain ATCC BAA-1301 / DSM 18059 / JW/NM-WN-LF).